Consider the following 236-residue polypeptide: MTKGQLLYEGKAKKLYTTEEPNVLLVEYKDSATAFNGEKKEEIEGKGILNNRITSLIFEKLQGNGIASHFVKQLSDTQQLVRKVDIIPIEVVVRNIVAGSLAKRIGLEEGTPLKRPIVEFYYKDDELGDPFITTEHIDVLELATSAEVSAIYDKALAINKVLQPIFADVNVTLIDFKLEFGRDADGHVLLADEISPDTCRLWDATTKQKLDKDVFRRDLGNLTEVYTIILSRLGGK.

The protein belongs to the SAICAR synthetase family.

The enzyme catalyses 5-amino-1-(5-phospho-D-ribosyl)imidazole-4-carboxylate + L-aspartate + ATP = (2S)-2-[5-amino-1-(5-phospho-beta-D-ribosyl)imidazole-4-carboxamido]succinate + ADP + phosphate + 2 H(+). It functions in the pathway purine metabolism; IMP biosynthesis via de novo pathway; 5-amino-1-(5-phospho-D-ribosyl)imidazole-4-carboxamide from 5-amino-1-(5-phospho-D-ribosyl)imidazole-4-carboxylate: step 1/2. This Lysinibacillus sphaericus (strain C3-41) protein is Phosphoribosylaminoimidazole-succinocarboxamide synthase.